We begin with the raw amino-acid sequence, 400 residues long: NADH dehydrogenase-like protein Rv1812c (400 aa).

The protein belongs to the NADH dehydrogenase family. It depends on FAD as a cofactor.

The protein is NADH dehydrogenase-like protein Rv1812c of Mycobacterium tuberculosis (strain ATCC 25618 / H37Rv).